Reading from the N-terminus, the 1816-residue chain is Kinesin-like protein KIF1B (1816 aa).

S2 is subject to N-acetylserine. Residues 5-354 (SVKVAVRVRP…LRYADRAKQI (350 aa)) enclose the Kinesin motor domain. 97-104 (GQTGAGKS) serves as a coordination point for ATP. The interval 270–350 (NINKSLTTLG…TLSTLRYADR (81 aa)) is interaction with KIFBP. Residues 365–386 (NAKLVRELKEEVTRLKDLLRAQ) are a coiled coil. The segment at 431–450 (FSTASMGSLTSSPSSCSLSS) is disordered. The segment covering 432 to 450 (STASMGSLTSSPSSCSLSS) has biased composition (low complexity). Positions 470 to 502 (GEEAIERLKESEKIIAELNETWEEKLRKTEAIR) form a coiled coil. In terms of domain architecture, FHA spans 556 to 612 (TRVGQADAERRQDIVLSGAHIKEEHCIFRSERSNSGEVIVTLEPCERSETYVNGKRV). T647 and T652 each carry phosphothreonine. Q663 and E665 each carry phosphoserine. 2 coiled-coil regions span residues 668–737 (EKQG…EEEV) and 841–869 (SLEK…AQDE). Phosphoserine occurs at positions 1054 and 1057. T1075 bears the Phosphothreonine mark. N1141, S1416, S1454, and S1487 each carry phosphoserine. Residues 1550 to 1570 (STTTFESAITPSESSGYDSGD) form a disordered region. Over residues 1554-1566 (FESAITPSESSGY) the composition is skewed to polar residues. Residues S1573, S1603, S1610, and S1613 each carry the phosphoserine modification. A disordered region spans residues 1617-1660 (RDPSESSFSSATLTPSSTCPSLVDSRSNSLDQKTPEANSRASSP). A compositionally biased stretch (low complexity) spans 1621–1634 (ESSFSSATLTPSST). The segment covering 1640–1658 (DSRSNSLDQKTPEANSRAS) has biased composition (polar residues). The PH domain occupies 1702–1799 (VSKKGYLHFK…WLYAFNPLLA (98 aa)).

The protein belongs to the TRAFAC class myosin-kinesin ATPase superfamily. Kinesin family. Unc-104 subfamily. In terms of assembly, monomer. Interacts with KIFBP; positively regulates KIF1B microtubule motor activity. Interacts (via C-terminus end of the kinesin-motor domain) with CHP1; the interaction occurs in a calcium-dependent manner. As to quaternary structure, interacts with MADD (via death domain); links this isoform to Rab3-carrying vesicles in anterograde synaptic vesicle transport. In terms of tissue distribution, isoform 3 is abundant in the skeletal muscle. It is also expressed in fetal brain, lung and kidney, and adult heart, placenta, testis, ovary and small intestine. Isoform 2 is abundant in the brain and also expressed in fetal heart, lung, liver and kidney, and adult skeletal muscle, placenta, liver, kidney, heart, spleen, thymus, prostate, testis, ovary, small intestine, colon and pancreas.

It is found in the cytoplasm. It localises to the cytoskeleton. The protein localises to the cytoplasmic vesicle. The protein resides in the secretory vesicle. Its subcellular location is the synaptic vesicle membrane. It is found in the mitochondrion. The catalysed reaction is ATP + H2O + a kinesin associated with a microtubule at position (n) = ADP + phosphate a kinesin associated with a microtubule at position (n+1, toward the plus end).. Its function is as follows. Has a plus-end-directed microtubule motor activity and functions as a motor for transport of vesicles and organelles along microtubules. In terms of biological role, has a plus-end-directed microtubule motor activity and functions as a motor for anterograde synaptic vesicle transport along axonal microtubules from the cell body to the presynapse in neuronal cells. Functions as a downstream effector in a developmental apoptotic pathway that is activated when nerve growth factor (NGF) becomes limiting for neuronal progenitor cells. Functionally, has a plus-end-directed microtubule motor activity and functions as a motor for anterograde transport of mitochondria. The protein is Kinesin-like protein KIF1B of Homo sapiens (Human).